Reading from the N-terminus, the 528-residue chain is Protein MGF 505-7R (528 aa).

5 ANK repeats span residues 54-83, 129-158, 261-290, 292-321, and 322-352; these read SIND…NLHY, GCDL…LLNV, SVKR…IPRG, IERL…YKVK, and NVKK…LLDA.

The protein belongs to the asfivirus MGF 505 family. As to quaternary structure, interacts with host STING1. Interacts with host JAK1; this interaction leads to JAK1 degradation. Interacts with host JAK2; this interaction leads to JAK2 degradation. Interacts with host RELA; this interaction inhibits NF-kappa-B promoter activity.

It is found in the host cytoplasm. Plays a role in virus cell tropism, and may be required for efficient virus replication in macrophages. Interferes with host NF-kappa-B promoter activity mediated by TLR8. Mechanistically, inhibits the phosphorylation and subsequent nuclear translocation of host NF-kappa-B RELA subunit downstream of TLR8. Promotes the expression of the autophagy-related protein host ULK1 to degrade host STING and inhibit the interferon response. Inhibits also JAK1- and JAK2-mediated signaling and thus negatively regulates the IFN-gamma signaling. The chain is Protein MGF 505-7R from African swine fever virus (strain Badajoz 1971 Vero-adapted) (Ba71V).